Here is a 309-residue protein sequence, read N- to C-terminus: Thioredoxin reductase (309 aa).

An FAD-binding site is contributed by 35-42 (EKQFPGGK). Cys134 and Cys137 are disulfide-bonded. 277-286 (DIVDKNVRQI) is an FAD binding site.

Belongs to the class-II pyridine nucleotide-disulfide oxidoreductase family. As to quaternary structure, homodimer. Requires FAD as cofactor.

The protein localises to the cytoplasm. The catalysed reaction is [thioredoxin]-dithiol + NADP(+) = [thioredoxin]-disulfide + NADPH + H(+). The sequence is that of Thioredoxin reductase (trxB) from Ureaplasma parvum serovar 3 (strain ATCC 700970).